A 445-amino-acid polypeptide reads, in one-letter code: Serine protease inhibitor A3F (445 aa).

N-linked (GlcNAc...) asparagine glycosylation is found at Asn-28, Asn-94, Asn-174, and Asn-259. The RCL stretch occupies residues Gly-357–Tyr-382.

The protein belongs to the serpin family.

This chain is Serine protease inhibitor A3F (Serpina3f), found in Mus musculus (Mouse).